The sequence spans 212 residues: Thymidylate kinase (212 aa).

11 to 18 (GLEGAGKS) contacts ATP.

The protein belongs to the thymidylate kinase family.

It catalyses the reaction dTMP + ATP = dTDP + ADP. Functionally, phosphorylation of dTMP to form dTDP in both de novo and salvage pathways of dTTP synthesis. This chain is Thymidylate kinase, found in Vibrio vulnificus (strain CMCP6).